Here is a 207-residue protein sequence, read N- to C-terminus: Ribonuclease HII (207 aa).

The region spanning 1-207 is the RNase H type-2 domain; it reads MDVLGIDEAG…ATVEKMKNSQ (207 aa). Asp-7, Glu-8, and Asp-105 together coordinate a divalent metal cation.

The protein belongs to the RNase HII family. Mn(2+) serves as cofactor. It depends on Mg(2+) as a cofactor.

Its subcellular location is the cytoplasm. The enzyme catalyses Endonucleolytic cleavage to 5'-phosphomonoester.. Functionally, endonuclease that specifically degrades the RNA of RNA-DNA hybrids. The sequence is that of Ribonuclease HII from Methanobrevibacter smithii (strain ATCC 35061 / DSM 861 / OCM 144 / PS).